A 439-amino-acid polypeptide reads, in one-letter code: Secreted aspartic protease LUC8 (439 aa).

The first 20 residues, Met1 to Ala20, serve as a signal peptide directing secretion. Residues Asn33 and Asn54 are each glycosylated (N-linked (GlcNAc...) asparagine). Positions Tyr51–Ala435 constitute a Peptidase A1 domain. Asp69 is an active-site residue. 4 N-linked (GlcNAc...) asparagine glycosylation sites follow: Asn110, Asn126, Asn179, and Asn289. The active site involves Asp300. Asn329 and Asn373 each carry an N-linked (GlcNAc...) asparagine glycan. The cysteines at positions 355 and 391 are disulfide-linked.

It belongs to the peptidase A1 family.

The protein resides in the secreted. In terms of biological role, secreted aspartic protease; part of the gene cluster that mediates the biosynthesis of the mycotoxin lucilactaene and the lucilactaene-related compound NG-391 that act as cell cycle inhibitors with potent growth inhibitory activity against malarial parasites, moderate growth inhibitory activity against cancer cells, and no activity against bacteria and fungi. Within the cluster, LUC7 and LUC8 encode proteins which are not commonly involved in the biosynthesis of secondary metabolites and are not essential for lucilactaene biosynthesis. This Fusarium sp protein is Secreted aspartic protease LUC8.